We begin with the raw amino-acid sequence, 590 residues long: Potassium-transporting ATPase potassium-binding subunit (590 aa).

A run of 4 helical transmembrane segments spans residues 3 to 23 (AFLLQLAIYLAVLLVLARPLG), 63 to 83 (HYALAVIAVNVLGALAVYALQ), 134 to 154 (GLAVQNFLSAATGIAVVIALI), and 177 to 197 (LYVLLPLSVIVAVFFVSQGAI). Residues 217-244 (PKTDAQGNPIKDAQGNPVTEKATTQKQT) form a disordered region. Transmembrane regions (helical) follow at residues 284–304 (FVQMLSIFLIPAALCFTFGAM), 312–332 (WAVLASMTILFVVLAVFEMWA), 359–379 (FGVVASSLFVTITTAASCGAV), 388–408 (ALGGFVPMFLIQLGEVVFGGV), 411–431 (GLYGMLVYAILAVFIAGLMIG), 450–470 (SIAILVTPLLVLVGTAVAVLA), 515–535 (VALGIVMWLGRFWIIVPVLAM), and 558–578 (LFVVLLIGSVLLVGALTYIPA).

Belongs to the KdpA family. In terms of assembly, the system is composed of three essential subunits: KdpA, KdpB and KdpC.

The protein resides in the cell inner membrane. Functionally, part of the high-affinity ATP-driven potassium transport (or Kdp) system, which catalyzes the hydrolysis of ATP coupled with the electrogenic transport of potassium into the cytoplasm. This subunit binds the periplasmic potassium ions and delivers the ions to the membrane domain of KdpB through an intramembrane tunnel. This Ralstonia nicotianae (strain ATCC BAA-1114 / GMI1000) (Ralstonia solanacearum) protein is Potassium-transporting ATPase potassium-binding subunit.